Consider the following 269-residue polypeptide: Tryptophan synthase alpha chain (269 aa).

Residues Glu49 and Asp60 each act as proton acceptor in the active site.

Belongs to the TrpA family. Tetramer of two alpha and two beta chains.

It carries out the reaction (1S,2R)-1-C-(indol-3-yl)glycerol 3-phosphate + L-serine = D-glyceraldehyde 3-phosphate + L-tryptophan + H2O. It functions in the pathway amino-acid biosynthesis; L-tryptophan biosynthesis; L-tryptophan from chorismate: step 5/5. Functionally, the alpha subunit is responsible for the aldol cleavage of indoleglycerol phosphate to indole and glyceraldehyde 3-phosphate. In Buchnera aphidicola subsp. Acyrthosiphon pisum (strain APS) (Acyrthosiphon pisum symbiotic bacterium), this protein is Tryptophan synthase alpha chain.